Reading from the N-terminus, the 120-residue chain is uncharacterized protein (120 aa).

Positions glutamine 4–glutamate 120 constitute a VOC domain.

This is an uncharacterized protein from Bacillus subtilis (strain 168).